The sequence spans 281 residues: Endochitinase B (281 aa).

A signal peptide spans 1–33 (MAMAKAGAPRVSAAQLVTLGLSLLCAVAGPAAA). Positions 34–68 (QNCGCQPNVCCSKFGYCGTTDEYCGDGCQSGPCRS) constitute a Chitin-binding type-1 domain. 4 disulfides stabilise this stretch: Cys-36/Cys-44, Cys-38/Cys-50, Cys-43/Cys-57, and Cys-61/Cys-66. The tract at residues 69-78 (GGGGSSGGGG) is hinge region (Gly-rich). The tract at residues 79–281 (ANVASVVTGS…GVDPGPNLTC (203 aa)) is catalytic. Residues Cys-101 and Cys-150 are joined by a disulfide bond. The active-site Proton donor is the Glu-145. An N-linked (GlcNAc...) asparagine glycan is attached at Asn-156. 2 disulfide bridges follow: Cys-162-Cys-171 and Cys-249-Cys-281. Asn-278 carries an N-linked (GlcNAc...) asparagine glycan.

The protein belongs to the glycosyl hydrolase 19 family. Chitinase class I subfamily.

Its subcellular location is the secreted. The enzyme catalyses Random endo-hydrolysis of N-acetyl-beta-D-glucosaminide (1-&gt;4)-beta-linkages in chitin and chitodextrins.. In terms of biological role, defense against chitin-containing fungal pathogens. Its action is countered by fungal polyglycine hydrolases, that cleaves within its hinge region (Gly-rich) to disrupt chitin-binding. The chain is Endochitinase B from Zea mays (Maize).